The following is a 346-amino-acid chain: 4-hydroxy-2-oxovalerate aldolase (346 aa).

A Pyruvate carboxyltransferase domain is found at 8 to 260 (VTVHDMTLRD…ETGVDVFKIQ (253 aa)). Residue 16–17 (RD) participates in substrate binding. Asp17 serves as a coordination point for Mn(2+). The active-site Proton acceptor is the His20. Substrate contacts are provided by Ser170 and His199. Residues His199 and His201 each contribute to the Mn(2+) site. Tyr290 lines the substrate pocket.

Belongs to the 4-hydroxy-2-oxovalerate aldolase family.

It catalyses the reaction (S)-4-hydroxy-2-oxopentanoate = acetaldehyde + pyruvate. The chain is 4-hydroxy-2-oxovalerate aldolase from Polaromonas naphthalenivorans (strain CJ2).